Consider the following 120-residue polypeptide: Large ribosomal subunit protein bL12 (120 aa).

It belongs to the bacterial ribosomal protein bL12 family. In terms of assembly, homodimer. Part of the ribosomal stalk of the 50S ribosomal subunit. Forms a multimeric L10(L12)X complex, where L10 forms an elongated spine to which 2 to 4 L12 dimers bind in a sequential fashion. Binds GTP-bound translation factors.

Forms part of the ribosomal stalk which helps the ribosome interact with GTP-bound translation factors. Is thus essential for accurate translation. In Haemophilus ducreyi (strain 35000HP / ATCC 700724), this protein is Large ribosomal subunit protein bL12.